We begin with the raw amino-acid sequence, 250 residues long: MGRVNDKVVLVTGGAMGMGLTHCTLLAREGATVYLSDMNEELGHQAVAEIRRQGGKAHFLHLDVTNENHWTGAVDTILAESDRLDALVNNAGILTLKPVQDTSNEEWDRIFEINVRSVFLGTRAVIEPMRKAHKGCIVNVSSIYGLVGAPGAAAYEASKGAVRLFTKACAVDLAPFNIRVNSVHPGVIATPMTQQILDAPQSARALLGPTLLGRAAQPMEVSQAVLFLVSDEASFVHGSELVVDGGYTAN.

NAD(+) contacts are provided by Met18, Asp37, Asp63, Val64, Asn90, Tyr155, Lys159, Ile188, Thr190, and Thr193. Residue Tyr155 is the Proton acceptor of the active site.

This sequence belongs to the short-chain dehydrogenases/reductases (SDR) family.

It catalyses the reaction cyclopentanol + NAD(+) = cyclopentanone + NADH + H(+). It carries out the reaction cyclohexanol + NAD(+) = cyclohexanone + NADH + H(+). The protein operates within alcohol metabolism; cyclopentanol degradation; 5-valerolactone from cyclopentanol: step 1/2. Catalyzes the oxidation of cyclopentanol to cyclopentanone and cyclohexanol to cyclohexanone. The activity toward cyclohexanol is 60% that of cyclopentanol. In Comamonas sp. (strain NCIMB 9872), this protein is Cyclopentanol dehydrogenase.